The chain runs to 597 residues: Siderophore iron transporter 2 (597 aa).

The residue at position 46 (S46) is a Phosphoserine. 14 helical membrane-spanning segments follow: residues 65-85 (IIVAYLGLYLLSFASSLEQQT), 97-117 (FSAHSNLATINLVGNILLAVV), 131-151 (SESLSLALGMTVLGYLSLAFS), 159-179 (VAYILYICGQTGLGLLSQLII), 190-210 (ILSAIPELPYLATVWIGPVLA), 225-245 (YGIWAFILPTVSLPLLASLFL), 281-301 (LDGLGIVLFVSGFTLLLLPFS), 312-332 (TILTLFTITLSIALLVTLCFY), 357-377 (VLIFTYFMSYYIFSNFLTSFL), 390-410 (LTLNVFVFSMTTTAILSGFLM), 419-439 (LLMISVPMYVLGILGIILFGI), 448-468 (LVLVLILAGMGGGLLTLSAQI), 485-505 (LYLTFSSVGGAFGSAIAGGVW), and 558-578 (KDLFHISLVASLFMFAGLVII).

It belongs to the major facilitator superfamily.

The protein resides in the membrane. Its function is as follows. Involved in the transport of siderophore iron and so has a role in iron homeostasis. This chain is Siderophore iron transporter 2 (str2), found in Schizosaccharomyces pombe (strain 972 / ATCC 24843) (Fission yeast).